Reading from the N-terminus, the 54-residue chain is Secreted virulence factor MC69 (54 aa).

A signal peptide spans 1-18; sequence MKFTLALLTTLCASLASA. An intrachain disulfide couples C38 to C48.

The protein belongs to the MC69 virulence factor family.

It localises to the secreted. Functionally, secreted protein required for appressorial penetration of intact host epidermal cells and for pathogenicity. This chain is Secreted virulence factor MC69, found in Colletotrichum orbiculare (strain 104-T / ATCC 96160 / CBS 514.97 / LARS 414 / MAFF 240422) (Cucumber anthracnose fungus).